Here is a 285-residue protein sequence, read N- to C-terminus: Protease HtpX homolog (285 aa).

2 consecutive transmembrane segments (helical) span residues 7–27 (TAML…MIGG) and 30–50 (GMTI…WFSD). His131 lines the Zn(2+) pocket. Residue Glu132 is part of the active site. His135 provides a ligand contact to Zn(2+). The next 2 helical transmembrane spans lie at 146-166 (ITAT…FFGG) and 177-197 (IAGI…QMAI). A Zn(2+)-binding site is contributed by Glu202.

This sequence belongs to the peptidase M48B family. Zn(2+) is required as a cofactor.

It is found in the cell inner membrane. In Burkholderia lata (strain ATCC 17760 / DSM 23089 / LMG 22485 / NCIMB 9086 / R18194 / 383), this protein is Protease HtpX homolog.